A 173-amino-acid chain; its full sequence is ATP synthase subunit b (173 aa).

A helical transmembrane segment spans residues 12–32; it reads LDVNPGLVVWTLITFLVVVLV.

The protein belongs to the ATPase B chain family. In terms of assembly, F-type ATPases have 2 components, F(1) - the catalytic core - and F(0) - the membrane proton channel. F(1) has five subunits: alpha(3), beta(3), gamma(1), delta(1), epsilon(1). F(0) has three main subunits: a(1), b(2) and c(10-14). The alpha and beta chains form an alternating ring which encloses part of the gamma chain. F(1) is attached to F(0) by a central stalk formed by the gamma and epsilon chains, while a peripheral stalk is formed by the delta and b chains.

The protein resides in the cell inner membrane. In terms of biological role, f(1)F(0) ATP synthase produces ATP from ADP in the presence of a proton or sodium gradient. F-type ATPases consist of two structural domains, F(1) containing the extramembraneous catalytic core and F(0) containing the membrane proton channel, linked together by a central stalk and a peripheral stalk. During catalysis, ATP synthesis in the catalytic domain of F(1) is coupled via a rotary mechanism of the central stalk subunits to proton translocation. Component of the F(0) channel, it forms part of the peripheral stalk, linking F(1) to F(0). The protein is ATP synthase subunit b of Leptospira borgpetersenii serovar Hardjo-bovis (strain JB197).